The sequence spans 887 residues: Inter-alpha-trypsin inhibitor heavy chain H3 (887 aa).

Residues M1 to G21 form the signal peptide. The propeptide occupies F22–R33. A VIT domain is found at L29–E158. A glycan (N-linked (GlcNAc...) asparagine) is linked at N91. The VWFA domain occupies P282–E442. N580 is a glycosylation site (N-linked (GlcNAc...) asparagine). Aspartate 1-(chondroitin 4-sulfate)-ester is present on D647. A propeptide spanning residues P648–F887 is cleaved from the precursor.

This sequence belongs to the ITIH family. I-alpha-I plasma protease inhibitors are assembled from one or two heavy chains (HC) and one light chain, bikunin. Pre-alpha-inhibitor (P-alpha-I) is composed of ITIH3/HC3 and bikunin. Post-translationally, heavy chains are linked to bikunin via chondroitin 4-sulfate esterified to the alpha-carboxyl of the C-terminal aspartate after propeptide cleavage.

The protein localises to the secreted. May act as a carrier of hyaluronan in serum or as a binding protein between hyaluronan and other matrix protein, including those on cell surfaces in tissues to regulate the localization, synthesis and degradation of hyaluronan which are essential to cells undergoing biological processes. This is Inter-alpha-trypsin inhibitor heavy chain H3 (Itih3) from Rattus norvegicus (Rat).